A 201-amino-acid chain; its full sequence is Akirin-2 (201 aa).

Phosphoserine occurs at positions 18 and 21. Residues 23–28 carry the Nuclear localization signal motif; it reads KRRRCA. Ser-55 bears the Phosphoserine mark. Positions 198–201 match the SYVS motif motif; sequence SYVS.

It belongs to the akirin family. As to quaternary structure, homodimer. Interacts with IPO9; the interaction is direct. Associates with 20S and 26S proteasomes. Interacts with SMARCD1; promoting SWI/SNF complex recruitment. Interacts with NFKBIZ. Interacts with YWHAB. Polyubiquitinated. Polyubiquitination is dependent of UBR5 that extends pre-ubiquitinated AKIRIN2.

The protein localises to the nucleus. It localises to the cytoplasm. The protein resides in the membrane. In terms of biological role, molecular adapter that acts as a bridge between a variety of multiprotein complexes, and which is involved in embryonic development, immunity, myogenesis and brain development. Plays a key role in nuclear protein degradation by promoting import of proteasomes into the nucleus: directly binds to fully assembled 20S proteasomes at one end and to nuclear import receptor IPO9 at the other end, bridging them together and mediating the import of pre-assembled proteasome complexes through the nuclear pore. Involved in innate immunity by regulating the production of interleukin-6 (IL6) downstream of Toll-like receptor (TLR): acts by bridging the NF-kappa-B inhibitor NFKBIZ and the SWI/SNF complex, leading to promote induction of IL6. Also involved in adaptive immunity by promoting B-cell activation. Involved in brain development: required for the survival and proliferation of cerebral cortical progenitor cells. Involved in myogenesis: required for skeletal muscle formation and skeletal development, possibly by regulating expression of muscle differentiation factors. Also plays a role in facilitating interdigital tissue regression during limb development. This Mus musculus (Mouse) protein is Akirin-2.